The primary structure comprises 344 residues: tRNA N6-adenosine threonylcarbamoyltransferase (344 aa).

Fe cation-binding residues include His110 and His114. Substrate is bound by residues 132 to 136 (LVSGG), Asp166, Gly179, Asp183, and Asn278. Fe cation is bound at residue Asp306.

Belongs to the KAE1 / TsaD family. Requires Fe(2+) as cofactor.

The protein localises to the cytoplasm. The catalysed reaction is L-threonylcarbamoyladenylate + adenosine(37) in tRNA = N(6)-L-threonylcarbamoyladenosine(37) in tRNA + AMP + H(+). In terms of biological role, required for the formation of a threonylcarbamoyl group on adenosine at position 37 (t(6)A37) in tRNAs that read codons beginning with adenine. Is involved in the transfer of the threonylcarbamoyl moiety of threonylcarbamoyl-AMP (TC-AMP) to the N6 group of A37, together with TsaE and TsaB. TsaD likely plays a direct catalytic role in this reaction. The sequence is that of tRNA N6-adenosine threonylcarbamoyltransferase from Nocardia farcinica (strain IFM 10152).